Here is a 469-residue protein sequence, read N- to C-terminus: MTQDNALLQAPELTLRDGSNSRKVFIKTYGCQMNVYDSTRMSDALARDGYEPTEDMEEADLVLLNTCHIREKAAEKVYSALGRLRDMKKKKAADGREMMIGVAGCVAQAEGEEILRRAPAVDVVIGPQTYHRLPEALRRAKEGQRVVDTDYAIEDKFEHLPIAESRKIRARGVTAFLTVQEGCDKFCTFCVVPYTRGSEVSRPVAQIVEEAEKLVEGGVREITLLGQNVNAWHGAGPRGEAWSLGDLLYRLAEIPGLARLRYTTSHPRDMDDRLIDAHRDLRALMPYLHLPVQSGSDRILKAMNRRHTAAEYLSLIARIRTVRPDIALSGDFITGFPGETDADFEDTLRLVEEVRYAQAFSFKYSTRPGTPGAELKDQVPEQIKAERLERLQALLLKQQQEFAESCIGKEIDLLLEKPGRMPEQLIGRSPWLQSVNVDAKASQIGDIIKVRITGTGNNSLFAERAEAAV.

In terms of domain architecture, MTTase N-terminal spans 22-142 (RKVFIKTYGC…LPEALRRAKE (121 aa)). 6 residues coordinate [4Fe-4S] cluster: Cys-31, Cys-67, Cys-105, Cys-183, Cys-187, and Cys-190. The region spanning 169–401 (RARGVTAFLT…QALLLKQQQE (233 aa)) is the Radical SAM core domain. Positions 404–466 (ESCIGKEIDL…NNSLFAERAE (63 aa)) constitute a TRAM domain.

The protein belongs to the methylthiotransferase family. MiaB subfamily. As to quaternary structure, monomer. The cofactor is [4Fe-4S] cluster.

The protein resides in the cytoplasm. The enzyme catalyses N(6)-dimethylallyladenosine(37) in tRNA + (sulfur carrier)-SH + AH2 + 2 S-adenosyl-L-methionine = 2-methylsulfanyl-N(6)-dimethylallyladenosine(37) in tRNA + (sulfur carrier)-H + 5'-deoxyadenosine + L-methionine + A + S-adenosyl-L-homocysteine + 2 H(+). Functionally, catalyzes the methylthiolation of N6-(dimethylallyl)adenosine (i(6)A), leading to the formation of 2-methylthio-N6-(dimethylallyl)adenosine (ms(2)i(6)A) at position 37 in tRNAs that read codons beginning with uridine. This chain is tRNA-2-methylthio-N(6)-dimethylallyladenosine synthase, found in Rhizobium leguminosarum bv. trifolii (strain WSM2304).